A 296-amino-acid chain; its full sequence is Probable 6-phosphogluconolactonase 1 (296 aa).

This sequence belongs to the glucosamine/galactosamine-6-phosphate isomerase family. 6-phosphogluconolactonase subfamily.

It carries out the reaction 6-phospho-D-glucono-1,5-lactone + H2O = 6-phospho-D-gluconate + H(+). It functions in the pathway carbohydrate degradation; pentose phosphate pathway; D-ribulose 5-phosphate from D-glucose 6-phosphate (oxidative stage): step 2/3. Hydrolysis of 6-phosphogluconolactone to 6-phosphogluconate. The protein is Probable 6-phosphogluconolactonase 1 of Oryza sativa subsp. japonica (Rice).